A 318-amino-acid polypeptide reads, in one-letter code: MSKHKVPPAYGGQAVVEGVMFGGKHHYVTAIRRTDGSIDFFKLPRKHNPKLNIVKKIPFLRGIAAIIEASANGTKHLNFSSERYGLDPSEDETLEQEEKKSSGLSMYLSLAVIGVLSFLFSKFVFTLVPVFLAELTRPIFSLNTAQIAIESLFKLILLLGYIYFLSMTPLIKRVFQYHGAEHKVINCYEQNLPITVENVQNQSRLHYRCGSSFILFTIIVGMFVYLLVPTDPLWLRVIDRVALIPVVLGISFEVLQLTNKVRDIPGLKLLGYPGLWLQLLTTKEPKDEQVEVAIESFNELLRLEALSEQNQKPSHNVI.

4 helical membrane-spanning segments follow: residues 112 to 132 (VIGV…PVFL), 147 to 167 (IAIE…FLSM), 209 to 229 (CGSS…LLVP), and 237 to 257 (VIDR…VLQL).

It is found in the cell membrane. This is an uncharacterized protein from Bacillus subtilis (strain 168).